The chain runs to 133 residues: Small ribosomal subunit protein uS8 (133 aa).

The protein belongs to the universal ribosomal protein uS8 family. Part of the 30S ribosomal subunit. Contacts proteins S5 and S12.

One of the primary rRNA binding proteins, it binds directly to 16S rRNA central domain where it helps coordinate assembly of the platform of the 30S subunit. The chain is Small ribosomal subunit protein uS8 from Prochlorococcus marinus (strain MIT 9312).